The sequence spans 441 residues: MHIAVVGLSHRTAPVEVREKLSIPEELVEKSFNNLKKIDQILEVSILSTCNRLEIYSLVKDPQLGIEAIKSFLLQFSGLDDEILSPHLFNYVQEKAVSHVMRVSAGLDSLVLGEGQILSQVKKMVRLGQDHHSLGPILNRLLTQAVSTGKRVRSETNLGTGAVSISSAAVELAQLKLGQAHGRDQLMTLETEKVAVVGAGRMSRLLLQHLQSKGCCSLTLLNRTKKRAEDLSAAFPDIQIDCQLIDELDSCLSLSTLVFTSTAANEPIIDAEKLIKIDRKPLLRLIDIGVPRNISSDAKSVSGIESHDVDDLQEVVSRNQEARQKLALEAEGLIEEECRVFLEWWDSLAAVPTINCLRSGLESIRKEELQKALSRMGPDFSARERKVVEALSKGIINKILHTPVTKLRAPQSRNDRRDSLDVIEKLFNLDVSSSLNKPKNN.

Substrate-binding positions include 49–52 (TCNR), Ser109, 114–116 (EGQ), and Gln120. The active-site Nucleophile is Cys50. 198–203 (GAGRMS) is an NADP(+) binding site.

It belongs to the glutamyl-tRNA reductase family. As to quaternary structure, homodimer.

It catalyses the reaction (S)-4-amino-5-oxopentanoate + tRNA(Glu) + NADP(+) = L-glutamyl-tRNA(Glu) + NADPH + H(+). The protein operates within porphyrin-containing compound metabolism; protoporphyrin-IX biosynthesis; 5-aminolevulinate from L-glutamyl-tRNA(Glu): step 1/2. It functions in the pathway porphyrin-containing compound metabolism; chlorophyll biosynthesis. Functionally, catalyzes the NADPH-dependent reduction of glutamyl-tRNA(Glu) to glutamate 1-semialdehyde (GSA). The protein is Glutamyl-tRNA reductase of Prochlorococcus marinus (strain NATL2A).